The chain runs to 197 residues: Small ribosomal subunit protein uS4B (197 aa).

Positions Cys88–Phe151 constitute an S4 RNA-binding domain.

It belongs to the universal ribosomal protein uS4 family. As to quaternary structure, part of the 30S ribosomal subunit. Contacts protein S5. The interaction surface between S4 and S5 is involved in control of translational fidelity.

One of the primary rRNA binding proteins, it binds directly to 16S rRNA where it nucleates assembly of the body of the 30S subunit. Functionally, with S5 and S12 plays an important role in translational accuracy. This Clostridium botulinum (strain Langeland / NCTC 10281 / Type F) protein is Small ribosomal subunit protein uS4B.